Consider the following 603-residue polypeptide: MFSKSDFRGIINSMGLVFGDIGTSPIYTLTVIFLLTRPTEVHVIGVLSLIIWTLITLVTVEYAWLAMSLGKKGEGGTIVLKELLVPLIKSGRNAAFITLLAYIGVSFLVGDGVITPAISILSAVEGLRIIPDFQDIGQGAIMFIAGIIAVALFSVQSKGTEEITWVFGPVMVLWFASLAFSGIASIFYTPGVLRAINPYYAISFLLHNGFTGFFVLSEVILCATGGEALYADMGHLGREPILKAWRLVFSALVLNYLGQGAFIIRNPESKNILFEMINQQAEVIYIPFLILSITATIIASQAMISGMFSIVYQGITTRIIPMLKIDYTSGKLRSQIYIGAVNWLLLISVLFMIFEFRDSHRLAAAYGLAVTGTMSITGLMMTLIFYLKGRMFRSFVSLFVTVIDVVFLLSNTYKIPHGGYWSIVIAAIAFSLIIIYTSGQKKLYELMNPMKIGDFLEKYKQVYASENKISGTALFFARDINYVPRYISNVMFENNIIYEDNIFISIIKCESPFGVKSSFAKDLAKGLRVFEINVGYMEVIDVVQILKDKGIQEKTIFYGIEDILTSNLIWKVFSVIKKLSPSFVQFYKLPSDKLHGVLTRFEM.

The next 12 helical transmembrane spans lie at 15–35 (GLVF…IFLL), 43–63 (VIGV…VEYA), 94–114 (AAFI…DGVI), 136–156 (IGQG…FSVQ), 163–183 (ITWV…FSGI), 201–221 (AISF…EVIL), 244–264 (AWRL…AFII), 284–304 (IYIP…QAMI), 336–356 (IYIG…IFEF), 367–387 (GLAV…IFYL), 391–411 (MFRS…LLSN), and 415–435 (IPHG…LIII).

The protein belongs to the HAK/KUP transporter (TC 2.A.72) family.

The protein resides in the cell membrane. It carries out the reaction K(+)(in) + H(+)(in) = K(+)(out) + H(+)(out). Functionally, transport of potassium into the cell. Likely operates as a K(+):H(+) symporter. The chain is Probable potassium transport system protein Kup from Methanosarcina acetivorans (strain ATCC 35395 / DSM 2834 / JCM 12185 / C2A).